Consider the following 248-residue polypeptide: MAIKVGVLGAQGRVGQAIVAGVTAAYDLELVAEVDRGDSLDVLVQSGAEVIVDFTTPDSVMDNLEFCISHGIHCVVGTTGFTPERLEIVKKWAEEKGNTGVLIAPNFAISAVLTMAFARQAARFFDSAEVVECHHPNKLDAPSGTAIHTAEGIAQARREAGMPTQPDATEQSLDGARGADVGGVKVHAVRMTGMVAHEEVIFGGPGQSLTIRQDSYDRTSFVPGVLVGVRNVAQHLGLTVGLEHYLDI.

Residues 9–14 (GAQGRV), 77–79 (GTT), and 104–107 (APNF) contribute to the NAD(+) site. Residue histidine 134 is the Proton donor/acceptor of the active site. A (S)-2,3,4,5-tetrahydrodipicolinate-binding site is contributed by histidine 135. Lysine 138 acts as the Proton donor in catalysis. 144–145 (GT) contributes to the (S)-2,3,4,5-tetrahydrodipicolinate binding site. Residues 157–176 (RREAGMPTQPDATEQSLDGA) form a disordered region.

The protein belongs to the DapB family.

The protein localises to the cytoplasm. It catalyses the reaction (S)-2,3,4,5-tetrahydrodipicolinate + NAD(+) + H2O = (2S,4S)-4-hydroxy-2,3,4,5-tetrahydrodipicolinate + NADH + H(+). The catalysed reaction is (S)-2,3,4,5-tetrahydrodipicolinate + NADP(+) + H2O = (2S,4S)-4-hydroxy-2,3,4,5-tetrahydrodipicolinate + NADPH + H(+). Its pathway is amino-acid biosynthesis; L-lysine biosynthesis via DAP pathway; (S)-tetrahydrodipicolinate from L-aspartate: step 4/4. Its function is as follows. Catalyzes the conversion of 4-hydroxy-tetrahydrodipicolinate (HTPA) to tetrahydrodipicolinate. This chain is 4-hydroxy-tetrahydrodipicolinate reductase, found in Corynebacterium diphtheriae (strain ATCC 700971 / NCTC 13129 / Biotype gravis).